A 25-amino-acid chain; its full sequence is Ranatuerin-1C (25 aa).

Cys19 and Cys25 form a disulfide bridge.

Expressed by the skin glands.

It is found in the secreted. Its function is as follows. Antibacterial activity against Gram-positive bacterium S.aureus (MIC=55 uM) and Gram-negative bacterium E.coli (MIC=1.5 uM). Has activity against C.albicans (MIC=58 uM). The chain is Ranatuerin-1C from Lithobates clamitans (Green frog).